A 135-amino-acid chain; its full sequence is MVSRDFDRDKRLLTARQFSAVFDSPTGKVPGKHVLLLARENGLDHPRLGLVIGKKNVKLAVQRNRLKRLIRESFRHNQEALAGWDIVMIARKGLGELENPELHQQFGKLWKRLLRNRPRTESPADAPGVADGTHA.

It belongs to the RnpA family. Consists of a catalytic RNA component (M1 or rnpB) and a protein subunit.

The enzyme catalyses Endonucleolytic cleavage of RNA, removing 5'-extranucleotides from tRNA precursor.. RNaseP catalyzes the removal of the 5'-leader sequence from pre-tRNA to produce the mature 5'-terminus. It can also cleave other RNA substrates such as 4.5S RNA. The protein component plays an auxiliary but essential role in vivo by binding to the 5'-leader sequence and broadening the substrate specificity of the ribozyme. This chain is Ribonuclease P protein component, found in Pseudomonas paraeruginosa (strain DSM 24068 / PA7) (Pseudomonas aeruginosa (strain PA7)).